The primary structure comprises 230 residues: Acyl-protein thioesterase 1 (230 aa).

Residues Ser119, Asp174, and His208 each act as charge relay system in the active site. At Lys224 the chain carries N6-acetyllysine.

Belongs to the AB hydrolase superfamily. AB hydrolase 2 family. As to quaternary structure, homodimer. Ubiquitous. Detected at low levels in all tissues tested.

Its subcellular location is the cytoplasm. The protein localises to the cell membrane. It is found in the nucleus membrane. It localises to the endoplasmic reticulum. It carries out the reaction S-hexadecanoyl-L-cysteinyl-[protein] + H2O = L-cysteinyl-[protein] + hexadecanoate + H(+). The catalysed reaction is 1-hexadecanoyl-sn-glycero-3-phosphocholine + H2O = sn-glycerol 3-phosphocholine + hexadecanoate + H(+). It catalyses the reaction a 1-(9Z-octadecenoyl)-2-acyl-sn-glycero-3-phosphocholine + H2O = a 2-acyl-sn-glycero-3-phosphocholine + (9Z)-octadecenoate + H(+). Functionally, acts as an acyl-protein thioesterase. Hydrolyzes fatty acids from S-acylated cysteine residues in proteins such as trimeric G alpha proteins or HRAS. Acts as a palmitoyl thioesterase that catalyzes depalmitoylation of proteins, such as ADRB2, KCNMA1 and SQSTM1. Acts as a negative regulator of autophagy by mediating palmitoylation of SQSTM1, decreasing affinity between SQSTM1 and ATG8 proteins and recruitment of ubiquitinated cargo proteins to autophagosomes. Acts as a lysophospholipase and hydrolyzes lysophosphatidylcholine (lyso-PC). Also hydrolyzes lysophosphatidylethanolamine (lyso-PE), lysophosphatidylinositol (lyso-PI) and lysophosphatidylserine (lyso-PS). Has much higher thioesterase activity than lysophospholipase activity. Contributes to the production of lysophosphatidic acid (LPA) during blood coagulation by recognizing and cleaving plasma phospholipids to generate lysophospholipids which in turn act as substrates for ENPP2 to produce LPA. The sequence is that of Acyl-protein thioesterase 1 (Lypla1) from Rattus norvegicus (Rat).